Reading from the N-terminus, the 475-residue chain is ATP synthase subunit beta 1 (475 aa).

152-159 (GGAGVGKT) contacts ATP.

The protein belongs to the ATPase alpha/beta chains family. As to quaternary structure, F-type ATPases have 2 components, CF(1) - the catalytic core - and CF(0) - the membrane proton channel. CF(1) has five subunits: alpha(3), beta(3), gamma(1), delta(1), epsilon(1). CF(0) has four main subunits: a(1), b(1), b'(1) and c(9-12).

Its subcellular location is the cell inner membrane. It carries out the reaction ATP + H2O + 4 H(+)(in) = ADP + phosphate + 5 H(+)(out). Produces ATP from ADP in the presence of a proton gradient across the membrane. The catalytic sites are hosted primarily by the beta subunits. This Cereibacter sphaeroides (strain ATCC 17029 / ATH 2.4.9) (Rhodobacter sphaeroides) protein is ATP synthase subunit beta 1.